The sequence spans 385 residues: Iron uptake system component EfeM (385 aa).

Residues 1–22 (MNFTKIAVSAGCILALCAGCGA) form the signal peptide.

Belongs to the EfeM/EfeO family. In terms of assembly, component of the iron transporter efeUOB/M complex composed of EfeU, EfeM and EfeB; EfeU is essential for the complex formation.

The protein localises to the cell membrane. It is found in the membrane raft. Functionally, part of the iron transporter system efeUOB/M involved in iron import. Specifically binds Fe(3+), which is produced by EfeB-mediated oxidation of Fe(2+), and delivers it to the cell membrane permease EfeU. This Bacillus subtilis (strain 168) protein is Iron uptake system component EfeM.